Reading from the N-terminus, the 188-residue chain is Elongation factor P (188 aa).

Belongs to the elongation factor P family.

It localises to the cytoplasm. The protein operates within protein biosynthesis; polypeptide chain elongation. Functionally, involved in peptide bond synthesis. Stimulates efficient translation and peptide-bond synthesis on native or reconstituted 70S ribosomes in vitro. Probably functions indirectly by altering the affinity of the ribosome for aminoacyl-tRNA, thus increasing their reactivity as acceptors for peptidyl transferase. This chain is Elongation factor P, found in Bifidobacterium longum (strain DJO10A).